Here is a 129-residue protein sequence, read N- to C-terminus: Serum amyloid A protein (129 aa).

The N-terminal stretch at 1 to 18 (MKLFPGLLFCSLVLGVSG) is a signal peptide. At glutamine 19 the chain carries Pyrrolidone carboxylic acid. The disordered stretch occupies residues 92-129 (GDSGHGAEDSKADQAANEWGRSGKDPNHFRPAGLPDKY). Residues 112–129 (RSGKDPNHFRPAGLPDKY) constitute a propeptide, often cleaved during amyloidogenesis.

Belongs to the SAA family. Post-translationally, this protein is the precursor of amyloid protein A, which is formed by the removal of residues from the C-terminal end. As to expression, expressed by the liver; secreted in plasma.

It localises to the secreted. Functionally, major acute phase reactant. Apolipoprotein of the HDL complex. This chain is Serum amyloid A protein (SAA1), found in Canis lupus familiaris (Dog).